The chain runs to 262 residues: Cell division protein FtsQ (262 aa).

Residues 1 to 20 lie on the Cytoplasmic side of the membrane; sequence MSWSDKRRHWRARKSQVNWY. Residues 21 to 41 form a helical membrane-spanning segment; it reads LWSGIGFLSLVIGSFVFGGYL. The Periplasmic segment spans residues 42 to 262; it reads LHKFLNDAST…EPIINDEKPR (221 aa). Positions 52–121 constitute a POTRA domain; it reads LPIEAVAIKG…AKLRVYLQEQ (70 aa).

It belongs to the FtsQ/DivIB family. FtsQ subfamily. Part of a complex composed of FtsB, FtsL and FtsQ.

It localises to the cell inner membrane. Its function is as follows. Essential cell division protein. May link together the upstream cell division proteins, which are predominantly cytoplasmic, with the downstream cell division proteins, which are predominantly periplasmic. May control correct divisome assembly. In Shewanella oneidensis (strain ATCC 700550 / JCM 31522 / CIP 106686 / LMG 19005 / NCIMB 14063 / MR-1), this protein is Cell division protein FtsQ.